The following is a 130-amino-acid chain: Glycine cleavage system H protein (130 aa).

Residues 24–106 (TVTIGITDHA…YDEGWFFKVK (83 aa)) enclose the Lipoyl-binding domain. N6-lipoyllysine is present on K65.

The protein belongs to the GcvH family. As to quaternary structure, the glycine cleavage system is composed of four proteins: P, T, L and H. (R)-lipoate is required as a cofactor.

The glycine cleavage system catalyzes the degradation of glycine. The H protein shuttles the methylamine group of glycine from the P protein to the T protein. The chain is Glycine cleavage system H protein from Teredinibacter turnerae (strain ATCC 39867 / T7901).